The chain runs to 204 residues: IMPACT family member YigZ (204 aa).

The protein belongs to the IMPACT family. Monomer.

The polypeptide is IMPACT family member YigZ (yigZ) (Escherichia coli (strain K12)).